A 435-amino-acid polypeptide reads, in one-letter code: Methylenetetrahydrofolate--tRNA-(uracil-5-)-methyltransferase TrmFO (435 aa).

9–14 (GAGLAG) is an FAD binding site.

It belongs to the MnmG family. TrmFO subfamily. FAD serves as cofactor.

The protein resides in the cytoplasm. It catalyses the reaction uridine(54) in tRNA + (6R)-5,10-methylene-5,6,7,8-tetrahydrofolate + NADH + H(+) = 5-methyluridine(54) in tRNA + (6S)-5,6,7,8-tetrahydrofolate + NAD(+). The catalysed reaction is uridine(54) in tRNA + (6R)-5,10-methylene-5,6,7,8-tetrahydrofolate + NADPH + H(+) = 5-methyluridine(54) in tRNA + (6S)-5,6,7,8-tetrahydrofolate + NADP(+). Its function is as follows. Catalyzes the folate-dependent formation of 5-methyl-uridine at position 54 (M-5-U54) in all tRNAs. The protein is Methylenetetrahydrofolate--tRNA-(uracil-5-)-methyltransferase TrmFO of Staphylococcus haemolyticus (strain JCSC1435).